A 109-amino-acid polypeptide reads, in one-letter code: Putative double-stranded DNA mimic protein CKO_01325 (109 aa).

It belongs to the putative dsDNA mimic protein family.

May act as a double-stranded DNA (dsDNA) mimic. Probably regulates the activity of a dsDNA-binding protein. This chain is Putative double-stranded DNA mimic protein CKO_01325, found in Citrobacter koseri (strain ATCC BAA-895 / CDC 4225-83 / SGSC4696).